The following is a 142-amino-acid chain: Large ribosomal subunit protein uL11 (142 aa).

This sequence belongs to the universal ribosomal protein uL11 family. Part of the ribosomal stalk of the 50S ribosomal subunit. Interacts with L10 and the large rRNA to form the base of the stalk. L10 forms an elongated spine to which L12 dimers bind in a sequential fashion forming a multimeric L10(L12)X complex. In terms of processing, one or more lysine residues are methylated.

Functionally, forms part of the ribosomal stalk which helps the ribosome interact with GTP-bound translation factors. This Klebsiella pneumoniae (strain 342) protein is Large ribosomal subunit protein uL11.